The following is a 439-amino-acid chain: L-cysteine:1D-myo-inositol 2-amino-2-deoxy-alpha-D-glucopyranoside ligase 2 (439 aa).

Residue Cys60 participates in Zn(2+) binding. Residues 60-63, Thr75, and 98-100 contribute to the L-cysteinyl-5'-AMP site; these read CGIT and NVT. The 'HIGH' region signature appears at 62–72; it reads ITPYDSTHLGH. The 'ERGGDP' region motif lies at 203-208; sequence ERGGDP. Trp243 contacts L-cysteinyl-5'-AMP. Cys247 serves as a coordination point for Zn(2+). 265–267 contributes to the L-cysteinyl-5'-AMP binding site; it reads GVD. Position 272 (His272) interacts with Zn(2+). An L-cysteinyl-5'-AMP-binding site is contributed by Ile299. The 'KMSKS' region motif lies at 305–309; that stretch reads KMSKS.

Belongs to the class-I aminoacyl-tRNA synthetase family. MshC subfamily. In terms of assembly, monomer. Zn(2+) serves as cofactor.

It catalyses the reaction 1D-myo-inositol 2-amino-2-deoxy-alpha-D-glucopyranoside + L-cysteine + ATP = 1D-myo-inositol 2-(L-cysteinylamino)-2-deoxy-alpha-D-glucopyranoside + AMP + diphosphate + H(+). Catalyzes the ATP-dependent condensation of GlcN-Ins and L-cysteine to form L-Cys-GlcN-Ins. The protein is L-cysteine:1D-myo-inositol 2-amino-2-deoxy-alpha-D-glucopyranoside ligase 2 of Corynebacterium urealyticum (strain ATCC 43042 / DSM 7109).